Consider the following 140-residue polypeptide: Large-conductance mechanosensitive channel 2 (140 aa).

Helical transmembrane passes span Phe8–Gly28, Ile30–Leu50, and Gly81–Val101.

This sequence belongs to the MscL family. Homopentamer.

It is found in the cell inner membrane. Functionally, channel that opens in response to stretch forces in the membrane lipid bilayer. May participate in the regulation of osmotic pressure changes within the cell. The protein is Large-conductance mechanosensitive channel 2 of Mesorhizobium japonicum (strain LMG 29417 / CECT 9101 / MAFF 303099) (Mesorhizobium loti (strain MAFF 303099)).